The primary structure comprises 683 residues: Synaptic vesicle glycoprotein 2B (683 aa).

Positions 1-42 are disordered; that stretch reads MDDYKYQDNYGGYAPSDGYYRGNESNPEEDAQSDVTEGHDEE. Topologically, residues 1–108 are cytoplasmic; sequence MDDYKYQDNY…MDECGHGRFQ (108 aa). Serine 33 bears the Phosphoserine mark. The residue at position 36 (threonine 36) is a Phosphothreonine. Residues 109–129 traverse the membrane as a helical segment; it reads WILFFVLGLALMADGVEVFVV. At 130–148 the chain is on the extracellular side; the sequence is SFALPSAEKDMCLSSSKKG. A helical membrane pass occupies residues 149–169; that stretch reads MLGMIVYLGMMAGAFILGGLA. Residues 170-182 are Cytoplasmic-facing; sequence DKLGRKRVLSMSL. The helical transmembrane segment at 183–203 threads the bilayer; it reads AVNASFASLSSFVQGYGAFLF. The Extracellular portion of the chain corresponds to 204 to 205; that stretch reads CR. Residues 206-226 form a helical membrane-spanning segment; sequence LISGIGIGGALPIVFAYFSEF. Residues 227–237 are Cytoplasmic-facing; sequence LSREKRGEHLS. The helical transmembrane segment at 238–258 threads the bilayer; sequence WLGIFWMTGGLYASAMAWSII. At 259–277 the chain is on the extracellular side; sequence PHYGWGFSMGTNYHFHSWR. Residues 278–298 traverse the membrane as a helical segment; the sequence is VFVIVCALPCTVSMVALKFMP. Residues 299-390 are Cytoplasmic-facing; sequence ESPRFLLEMG…CVMGPYRMNT (92 aa). The chain crosses the membrane as a helical span at residues 391 to 411; that stretch reads LILAVVWFAMAFSYYGLTVWF. The Extracellular portion of the chain corresponds to 412–535; sequence PDMIRYFQDE…CHMDLEQDND (124 aa). Tyrosine 423 carries the phosphotyrosine modification. Asparagine 441, asparagine 491, and asparagine 516 each carry an N-linked (GlcNAc...) asparagine glycan. A helical transmembrane segment spans residues 536–556; that stretch reads FLIYLVSFLGSLSVLPGNIIS. Residues 557 to 565 are Cytoplasmic-facing; sequence ALLMDRIGR. A helical transmembrane segment spans residues 566–586; that stretch reads LKMIGGSMLISAVCCFFLFFG. Residues 587-592 are Extracellular-facing; that stretch reads NSESAM. Residues 593-613 traverse the membrane as a helical segment; that stretch reads IGWQCLFCGTSIAAWNALDVI. At 614 to 626 the chain is on the cytoplasmic side; sequence TVELYPTNQRATA. Residues 627-649 traverse the membrane as a helical segment; it reads FGILNGLCKFGAILGNTIFASFV. Over 650–653 the chain is Extracellular; that stretch reads GITK. Residues 654-672 traverse the membrane as a helical segment; the sequence is VVPILLAAASLVGGGLIAL. Topologically, residues 673–683 are cytoplasmic; it reads RLPETREQVLM.

The protein belongs to the major facilitator superfamily. In terms of assembly, interacts with SYT1 in a calcium-independent manner. Forms a complex with SYT1, syntaxin-1 and SNAP25. As to quaternary structure, (Microbial infection) Interacts with C.botulinum neurotoxin type A2 (BoNT/A, botA). Interaction is improved by glycosylation of SV2. In terms of processing, N-glycosylated. The N-terminal cytoplasmic domain is phosphorylated by CK1.

The protein resides in the cytoplasmic vesicle. The protein localises to the secretory vesicle. It is found in the synaptic vesicle membrane. It localises to the acrosome. Probably plays a role in the control of regulated secretion in neural and endocrine cells. In terms of biological role, (Microbial infection) Receptor for the C.botulinum neurotoxin type A2 (BoNT/A, botA); glycosylation is not essential but enhances the interaction. Probably also serves as a receptor for the closely related C.botulinum neurotoxin type A1. This is Synaptic vesicle glycoprotein 2B (SV2B) from Homo sapiens (Human).